A 383-amino-acid polypeptide reads, in one-letter code: MAADHTHVRPWRMITRRQSRKIRVGSVEVGGDAPISVQSMTNTLTSDAAATLEQIRQLEEAGADIVRVSCPDVESTAAFKTIAREAKVPLVADIHFHYKRGIEAAQAGAACLRINPGNIGSPDRVRDVIQAARDHGCSMRIGVNAGSLERELLEKYGEPCPDAMVESALNHARILQDHDFHEFKISVKASDPFMTVAAYYQLAEAIDCPLHLGVTEAGATRTGTVKSAIGIGAMLWAGIGDTIRVSLAADPVEEIKVGFDILKSLGLRHRGVNIIACPSCARQGFNVIKTVEALEERLAHISTPMSLSIIGCVVNGPGEALMTDIGFTGGGAGAGMVYMAGKPDHKQSNEGMIDHIVDLVEKKAAEIQAAKAQDEAAQTVAAE.

Cys277, Cys280, Cys312, and Glu319 together coordinate [4Fe-4S] cluster.

It belongs to the IspG family. It depends on [4Fe-4S] cluster as a cofactor.

It catalyses the reaction (2E)-4-hydroxy-3-methylbut-2-enyl diphosphate + oxidized [flavodoxin] + H2O + 2 H(+) = 2-C-methyl-D-erythritol 2,4-cyclic diphosphate + reduced [flavodoxin]. It functions in the pathway isoprenoid biosynthesis; isopentenyl diphosphate biosynthesis via DXP pathway; isopentenyl diphosphate from 1-deoxy-D-xylulose 5-phosphate: step 5/6. In terms of biological role, converts 2C-methyl-D-erythritol 2,4-cyclodiphosphate (ME-2,4cPP) into 1-hydroxy-2-methyl-2-(E)-butenyl 4-diphosphate. The protein is 4-hydroxy-3-methylbut-2-en-1-yl diphosphate synthase (flavodoxin) of Caulobacter vibrioides (strain ATCC 19089 / CIP 103742 / CB 15) (Caulobacter crescentus).